Here is a 415-residue protein sequence, read N- to C-terminus: Esterase FrsA (415 aa).

It belongs to the FrsA family.

The catalysed reaction is a carboxylic ester + H2O = an alcohol + a carboxylate + H(+). In terms of biological role, catalyzes the hydrolysis of esters. The protein is Esterase FrsA of Vibrio parahaemolyticus serotype O3:K6 (strain RIMD 2210633).